A 249-amino-acid chain; its full sequence is Meiotic drive suppressor wtf25 (249 aa).

The interval 1 to 40 (MKNNYTSLKSPLDEEDELKTDHEIDLEKGPLPEYDSEEEG) is disordered. A compositionally biased stretch (basic and acidic residues) spans 19-30 (KTDHEIDLEKGP). The next 4 membrane-spanning stretches (helical) occupy residues 73-93 (LLII…PAFC), 110-130 (WTLF…LTYF), 151-170 (NMIF…LKAE), and 187-207 (SASA…AETV).

Belongs to the WTF family. Homomer. Interacts with other proteins that exhibit high sequence similarity.

It localises to the spore membrane. Its subcellular location is the vacuole membrane. Acts as a suppressor component of the dual wtf meiotic drive system, and can suppress but not confer meiotic drive by compatible poisons. Wtf meiotic drive systems promote unequal transmission of alleles from the parental zygote to progeny spores by encoding a poison and an antidote from the same locus; the poison is trans-acting and forms toxic aggregates in all spores within an ascus, wherease the antidote is spore-specific and targets aggregates for degradation by the vacuole. Meiotic drive by wtf systems therefore lead to poisoning of all progeny that do not inherit the dual poison/antidote allele, or express a compatible antidote. The chain is Meiotic drive suppressor wtf25 from Schizosaccharomyces pombe (strain 972 / ATCC 24843) (Fission yeast).